The following is a 199-amino-acid chain: dITP/XTP pyrophosphatase (199 aa).

8–13 (TSNINK) lines the substrate pocket. Asp68 serves as the catalytic Proton acceptor. Asp68 is a Mg(2+) binding site. Residues Ser69, 155 to 158 (FGYN), Lys177, and 182 to 183 (HR) contribute to the substrate site.

The protein belongs to the HAM1 NTPase family. In terms of assembly, homodimer. The cofactor is Mg(2+).

The enzyme catalyses XTP + H2O = XMP + diphosphate + H(+). It carries out the reaction dITP + H2O = dIMP + diphosphate + H(+). It catalyses the reaction ITP + H2O = IMP + diphosphate + H(+). Pyrophosphatase that catalyzes the hydrolysis of nucleoside triphosphates to their monophosphate derivatives, with a high preference for the non-canonical purine nucleotides XTP (xanthosine triphosphate), dITP (deoxyinosine triphosphate) and ITP. Seems to function as a house-cleaning enzyme that removes non-canonical purine nucleotides from the nucleotide pool, thus preventing their incorporation into DNA/RNA and avoiding chromosomal lesions. This chain is dITP/XTP pyrophosphatase, found in Borrelia recurrentis (strain A1).